Consider the following 430-residue polypeptide: Sorting nexin-4 (430 aa).

Residues 1–18 (MDSASADASVTGSGNAKG) are compositionally biased toward polar residues. Residues 1-22 (MDSASADASVTGSGNAKGSSAE) form a disordered region. The 130-residue stretch at 33 to 162 (LEILVSDPQK…IFLVGNEWDT (130 aa)) folds into the PX domain. A 1,2-diacyl-sn-glycero-3-phospho-(1D-myo-inositol-3-phosphate) contacts are provided by Arg-83, Lys-109, and Arg-128. Residues 351–414 (ASRRDKINKL…NNLADENIKF (64 aa)) are a coiled coil.

The protein belongs to the sorting nexin family.

It is found in the cytoplasm. The protein localises to the cytosol. The protein resides in the preautophagosomal structure membrane. It localises to the endosome membrane. Functionally, sorting nexin, involved in the separation or division of vacuoles throughout the entire life cycle of the cells. Involved in retrieval of late-Golgi SNAREs from post-Golgi endosomes to the trans-Golgi network, for cytoplasm to vacuole transport (Cvt), and autophagy of large cargos including mitophagy, pexophagy and glycophagy. This is Sorting nexin-4 (SNX4) from Candida glabrata (strain ATCC 2001 / BCRC 20586 / JCM 3761 / NBRC 0622 / NRRL Y-65 / CBS 138) (Yeast).